Here is an 85-residue protein sequence, read N- to C-terminus: Large ribosomal subunit protein bL31B (85 aa).

It belongs to the bacterial ribosomal protein bL31 family. Type B subfamily. As to quaternary structure, part of the 50S ribosomal subunit.

The chain is Large ribosomal subunit protein bL31B from Aliivibrio salmonicida (strain LFI1238) (Vibrio salmonicida (strain LFI1238)).